Reading from the N-terminus, the 253-residue chain is Exosome complex component Rrp4 (253 aa).

The 74-residue stretch at 80-153 folds into the S1 motif domain; sequence GDIVIGIVVD…SRGPILTVQD (74 aa).

Belongs to the RRP4 family. In terms of assembly, component of the archaeal exosome complex. Forms a trimer of Rrp4 and/or Csl4 subunits. The trimer associates with a hexameric ring-like arrangement composed of 3 Rrp41-Rrp42 heterodimers.

The protein resides in the cytoplasm. Non-catalytic component of the exosome, which is a complex involved in RNA degradation. Increases the RNA binding and the efficiency of RNA degradation. Confers strong poly(A) specificity to the exosome. This is Exosome complex component Rrp4 from Ignisphaera aggregans (strain DSM 17230 / JCM 13409 / AQ1.S1).